The sequence spans 555 residues: Oxamate carbamoyltransferase subunit AllF (555 aa).

This sequence belongs to the AllF family. As to quaternary structure, the OXTCase is composed of 3 subunits, AllF, AllG and AllH. The cofactor is Mg(2+).

The enzyme catalyses oxamate + carbamoyl phosphate = N-carbamoyl-2-oxoglycine + phosphate. The protein operates within nitrogen metabolism; (S)-allantoin degradation. Component of a carbamoyltransferase involved in the anaerobic nitrogen utilization via the assimilation of allantoin. Catalyzes the conversion of oxalurate (N-carbamoyl-2-oxoglycine) to oxamate and carbamoyl phosphate. This Escherichia coli (strain K12) protein is Oxamate carbamoyltransferase subunit AllF.